The chain runs to 147 residues: VEWTEDERTAIKSKWLKINIEEIGPQAMRRLLIVCPWTQRHFANFGNLSTAAAIMNNDKVAKHGTTVMGGLDRAIQNMDDIKNAYRQLSVMHSEKLHVDPDNFRLLAEHITLCMAAKFGPTEFTADVQEAWQKFLMAVTSALARQYH.

The Globin domain occupies 2-147; that stretch reads EWTEDERTAI…VTSALARQYH (146 aa). Heme b-binding residues include His-63 and His-92.

This sequence belongs to the globin family. In terms of assembly, heterotetramer of two alpha chains and two beta chains. Red blood cells.

In terms of biological role, involved in oxygen transport from gills to the various peripheral tissues. This is Hemoglobin anodic subunit beta (hbb1) from Anguilla anguilla (European freshwater eel).